The following is a 420-amino-acid chain: Serine--tRNA ligase (420 aa).

An L-serine-binding site is contributed by 229-231 (TAE). 260-262 (RSE) contributes to the ATP binding site. Glu-283 contacts L-serine. 347–350 (EISS) contributes to the ATP binding site. Ser-381 serves as a coordination point for L-serine.

Belongs to the class-II aminoacyl-tRNA synthetase family. Type-1 seryl-tRNA synthetase subfamily. As to quaternary structure, homodimer. The tRNA molecule binds across the dimer.

Its subcellular location is the cytoplasm. The catalysed reaction is tRNA(Ser) + L-serine + ATP = L-seryl-tRNA(Ser) + AMP + diphosphate + H(+). It catalyses the reaction tRNA(Sec) + L-serine + ATP = L-seryl-tRNA(Sec) + AMP + diphosphate + H(+). Its pathway is aminoacyl-tRNA biosynthesis; selenocysteinyl-tRNA(Sec) biosynthesis; L-seryl-tRNA(Sec) from L-serine and tRNA(Sec): step 1/1. In terms of biological role, catalyzes the attachment of serine to tRNA(Ser). Is also able to aminoacylate tRNA(Sec) with serine, to form the misacylated tRNA L-seryl-tRNA(Sec), which will be further converted into selenocysteinyl-tRNA(Sec). The polypeptide is Serine--tRNA ligase (Gluconobacter oxydans (strain 621H) (Gluconobacter suboxydans)).